An 815-amino-acid polypeptide reads, in one-letter code: MQYDPKAIEQKWQNEWKEKNAFEPQENYSKEKMYVLSMFPYPSGRIHMGHVRNYTIGDAIARYYRKTGANVLHPIGWDAFGMPAENAAIKHKVHPKKWTYENIDYMRKELDALGLSFSHDREFATCDPLYSKWEQSFIIDMWNRGLLYRKKAAVNWCPHDKTVLANEQVIEGRCWRCDTEVVQKEIEQYFLKITDYAQELLEDLKKLEGNWPNQVIAMQRNWIGRSEGLEFRLHFDETSAKKAGIDGFEVFTTRPDTIYGVTYTALAPEHPVVKHLIETKQLSDEAVQKICTMQNQNARTRQQAEKEGLFLDLYVIHPLTKQKIPVWVANFVLAEYGSGAVMAVPAHDERDFEFAHKYNLPIKYIIKPKEGELDTTKAYTEPGILFDSGEFSGFESSEAKQKIIEYFEENGIGKRSVNYKLKDWLVSRQRYWGTPIPLIKCPKCGIVPEKKENLPVTLPEDVEITGEGNPLELHPTWKKTTCPKCGGEAERETDTLDTFVESSWYFLRYTTPRKYWEEVPFRKEDTDYWMPVDQYIGGIEHAILHLLYARFFTKVLRDLGYVNLDEPFKRLLTQGMVLKDGAKMSKSKGNTVDPDEIVAKFGADTARLFILFAAPPAKELEWSDSAVEGAYRFIKRFFERSQNAYKTKSLPKIDQKSLSKEEKEARKKVYEALQKSTDVYTKSFSFNTLIAASMEALNALNGQNNPDIWTEGYWVLTNILEPIIPHTCWEISHNLFERNNFTRLQLDPAALEEDSVTLAVTVNGKRRAEIEVPKDASKEEILAKAKEIAKKWIDGKTIVKEIVVPGRLVNIVVKG.

Residues 40-50 carry the 'HIGH' region motif; sequence PYPSGRIHMGH. The 'KMSKS' region signature appears at 583–587; it reads KMSKS. Lysine 586 contacts ATP.

This sequence belongs to the class-I aminoacyl-tRNA synthetase family.

Its subcellular location is the cytoplasm. The catalysed reaction is tRNA(Leu) + L-leucine + ATP = L-leucyl-tRNA(Leu) + AMP + diphosphate. The protein is Leucine--tRNA ligase of Nitratiruptor sp. (strain SB155-2).